We begin with the raw amino-acid sequence, 363 residues long: Adenosine deaminase (363 aa).

Zn(2+) is bound by residues His42 and His44. Residues 44 to 46, Asp172, and Gly201 contribute to the a purine D-ribonucleoside site; that span reads HLD. The tract at residues 170 to 184 is gating helix loop; regulates binding affinity for substrates and thus substrate selectivity; that stretch reads IGDTGHRAADIKASA. Residue His226 participates in Zn(2+) binding. 3 residues coordinate a purine D-ribonucleoside: Glu229, His253, and Asp310. Asp310 serves as a coordination point for Zn(2+).

Belongs to the metallo-dependent hydrolases superfamily. Adenosine and AMP deaminases family. It depends on Zn(2+) as a cofactor.

The enzyme catalyses adenosine + H2O + H(+) = inosine + NH4(+). The catalysed reaction is S-methyl-5'-thioadenosine + H2O + H(+) = S-methyl-5'-thioinosine + NH4(+). It functions in the pathway purine metabolism; purine nucleoside salvage. Its activity is regulated as follows. Inhibited by coformycin and methylthiocoformycin (MT-coformycin). Its function is as follows. Catalyzes the hydrolytic deamination of adenosine to produce inosine. Unlike mammalian adenosine deaminases, also catalyzes the deamination of 5'-methylthioadenosine (MTA), a by-product of polyamine biosynthesis, to produce 5'-methylthioinosine (MTI). Plays an essential role in the purine salvage pathway which allows the parasite to use host cell purines for the synthesis of nucleic acids. This Plasmodium knowlesi protein is Adenosine deaminase.